A 225-amino-acid chain; its full sequence is Prepilin leader peptidase/N-methyltransferase (225 aa).

Topologically, residues 1–2 (MT) are periplasmic. A helical membrane pass occupies residues 3 to 23 (MLLPLFILVGFIADYFVNAIA). Over 24–67 (YHLSPLEDKTALTFRQVLVHFRQKKYAWHDTVPLILCVAAAIAC) the chain is Cytoplasmic. The chain crosses the membrane as a helical span at residues 68-88 (ALAPFTPIVTGALFLYFCFVL). Over 89-103 (TLSVIDFRTQLLPDK) the chain is Periplasmic. The helical transmembrane segment at 104–124 (LTLPLLWLGLVFNAQYGLIDL) threads the bilayer. Over 125–127 (HDA) the chain is Cytoplasmic. Residues 128–148 (VYGAVAGYGVLWCVYWGVWLV) traverse the membrane as a helical segment. Over 149 to 174 (CHKEGLGYGDFKLLAAAGAWCGWQTL) the chain is Periplasmic. The helical transmembrane segment at 175–195 (PMILLIASLGGIGYAIVSQLL) threads the bilayer. At 196-202 (QRRTITT) the chain is on the cytoplasmic side. Residues 203-223 (IAFGPWLALGSMINLGYLAWI) form a helical membrane-spanning segment. The Periplasmic portion of the chain corresponds to 224 to 225 (SY).

It belongs to the peptidase A24 family.

Its subcellular location is the cell inner membrane. The enzyme catalyses Typically cleaves a -Gly-|-Phe- bond to release an N-terminal, basic peptide of 5-8 residues from type IV prepilin, and then N-methylates the new N-terminal amino group, the methyl donor being S-adenosyl-L-methionine.. Its function is as follows. Plays a role in type II pseudopili formation by proteolytically removing the leader sequence from substrate proteins and subsequently monomethylating the alpha-amino group of the newly exposed N-terminal phenylalanine. Substrates include proteins required for biogenesis of the type II general secretory apparatus. The sequence is that of Prepilin leader peptidase/N-methyltransferase (gspO) from Escherichia coli (strain K12).